The chain runs to 204 residues: Large ribosomal subunit protein uL22m (204 aa).

Residues 1–38 (MAAVILERLGALWVQNLRGKLALGILPQSHIHTSASLE) constitute a mitochondrion transit peptide.

This sequence belongs to the universal ribosomal protein uL22 family. In terms of assembly, component of the mitochondrial ribosome large subunit (39S) which comprises a 16S rRNA and about 50 distinct proteins.

It is found in the mitochondrion. The chain is Large ribosomal subunit protein uL22m (MRPL22) from Bos taurus (Bovine).